Here is a 224-residue protein sequence, read N- to C-terminus: 7-cyano-7-deazaguanine synthase (224 aa).

An ATP-binding site is contributed by 10–20 (LSGGLDSATVV). 4 residues coordinate Zn(2+): cysteine 189, cysteine 199, cysteine 202, and cysteine 205.

Belongs to the QueC family. Zn(2+) serves as cofactor.

The catalysed reaction is 7-carboxy-7-deazaguanine + NH4(+) + ATP = 7-cyano-7-deazaguanine + ADP + phosphate + H2O + H(+). It participates in purine metabolism; 7-cyano-7-deazaguanine biosynthesis. Functionally, catalyzes the ATP-dependent conversion of 7-carboxy-7-deazaguanine (CDG) to 7-cyano-7-deazaguanine (preQ(0)). The protein is 7-cyano-7-deazaguanine synthase of Stutzerimonas stutzeri (strain A1501) (Pseudomonas stutzeri).